We begin with the raw amino-acid sequence, 713 residues long: Nucleolin (713 aa).

A disordered region spans residues 1 to 309 (MVKLAKAGKT…QKIEGSEPTT (309 aa)). An N6-acetyllysine mark is found at Lys-9, Lys-15, and Lys-16. Over residues 24-46 (VEEDSEDEEMSEDEDDSSGEEEV) the composition is skewed to acidic residues. Phosphoserine is present on residues Ser-28, Ser-34, Ser-40, and Ser-41. Low complexity predominate over residues 56 to 111 (ATTTPAKKVVVSQTKKAAVPTPAKKAAVTPGKKAAATPAKKAVTPAKVVPTPGKKG). Repeat 1 spans residues 58 to 65 (TTPAKKVV). The interval 58 to 135 (TTPAKKVVVS…GAVTPAKGAK (78 aa)) is 8 X 8 AA tandem repeats of X-T-P-X-K-K-X-X. Position 67 is a phosphoserine (Ser-67). A phosphothreonine mark is found at Thr-69, Thr-76, Thr-84, and Thr-92. Tandem repeats lie at residues 75–82 (PTPAKKAA), 83–90 (VTPGKKAA), and 91–98 (ATPAKKAV). The residue at position 96 (Lys-96) is an N6-acetyllysine. A Phosphothreonine modification is found at Thr-99. The stretch at 99-104 (TPAKVV) is one 5; truncated repeat. An N6-acetyllysine modification is found at Lys-102. Repeat 6 spans residues 105–112 (PTPGKKGA). Phosphothreonine is present on Thr-106. An N6-acetyllysine mark is found at Lys-109 and Lys-116. A run of 2 repeats spans residues 120-127 (PTPGKKGA) and 128-135 (VTPAKGAK). Thr-121 is subject to Phosphothreonine. Position 124 is an N6-acetyllysine (Lys-124). Phosphoserine is present on residues Ser-145 and Ser-157. The span at 145-168 (SDEDEDEEDEDDSDEDEDEEDEFE) shows a compositional bias: acidic residues. Residues 169–186 (PPVVKGVKPAKAAPAAPA) show a composition bias toward low complexity. Phosphoserine occurs at positions 187 and 213. Positions 187 to 218 (SEDEDEEDDDDEDDDDDDEEEEEEDDSEEEVM) are enriched in acidic residues. A Phosphothreonine modification is found at Thr-221. Residues 242–275 (EEEEDDEDDEDEEEDEDEEDEEDDEDEDEEEEEE) show a composition bias toward acidic residues. The span at 288–304 (MTKQKEAPEAKKQKIEG) shows a compositional bias: basic and acidic residues. Residue Lys-301 forms a Glycyl lysine isopeptide (Lys-Gly) (interchain with G-Cter in SUMO1); alternate linkage. Lys-301 participates in a covalent cross-link: Glycyl lysine isopeptide (Lys-Gly) (interchain with G-Cter in SUMO2); alternate. Phosphoserine is present on Ser-305. 2 RRM domains span residues 311–387 (FNLF…KPKG) and 397–470 (RTLL…YTGE). Residue Lys-322 is modified to N6-acetyllysine. A Glycyl lysine isopeptide (Lys-Gly) (interchain with G-Cter in SUMO1); alternate cross-link involves residue Lys-328. Residue Lys-328 forms a Glycyl lysine isopeptide (Lys-Gly) (interchain with G-Cter in SUMO2); alternate linkage. Lys-352 bears the N6-acetyllysine mark. Residue Ser-360 is modified to Phosphoserine. Residue Thr-371 is modified to Phosphothreonine. Lys-374 participates in a covalent cross-link: Glycyl lysine isopeptide (Lys-Gly) (interchain with G-Cter in SUMO2). A Glycyl lysine isopeptide (Lys-Gly) (interchain with G-Cter in SUMO2); alternate cross-link involves residue Lys-381. Lys-381 carries the post-translational modification N6-acetyllysine; alternate. The residue at position 402 (Lys-402) is an N6-acetyllysine. At Ser-405 the chain carries Phosphoserine. The residue at position 409 (Thr-409) is a Phosphothreonine. Lys-448 carries the N6-acetyllysine modification. Residues Ser-462 and Ser-464 each carry the phosphoserine modification. 2 positions are modified to N6-acetyllysine: Lys-471 and Lys-480. Positions 489-563 (KTLVLSNLSY…RTIRLELQGP (75 aa)) constitute an RRM 3 domain. Lys-516 is covalently cross-linked (Glycyl lysine isopeptide (Lys-Gly) (interchain with G-Cter in SUMO2); alternate). Residue Lys-516 is modified to N6-acetyllysine; alternate. Position 524 is an N6-acetyllysine (Lys-524). A Phosphoserine modification is found at Ser-566. An N6-acetyllysine modification is found at Lys-575. Positions 575–650 (KTLFVKGLSE…NKVTLDWAKP (76 aa)) constitute an RRM 4 domain. Lys-580 is covalently cross-linked (Glycyl lysine isopeptide (Lys-Gly) (interchain with G-Cter in SUMO2); alternate). Lys-580 is subject to N6-acetyllysine; alternate. Phosphoserine is present on Ser-583. Lys-592 participates in a covalent cross-link: Glycyl lysine isopeptide (Lys-Gly) (interchain with G-Cter in SUMO1); alternate. Lys-592 is covalently cross-linked (Glycyl lysine isopeptide (Lys-Gly) (interchain with G-Cter in SUMO2); alternate). 2 positions are modified to phosphoserine: Ser-594 and Ser-622. Lys-627 participates in a covalent cross-link: Glycyl lysine isopeptide (Lys-Gly) (interchain with G-Cter in SUMO2). Residues 645–713 (LDWAKPKGEG…KPQGKKTKFE (69 aa)) form a disordered region. Position 649 is an N6-acetyllysine (Lys-649). Residues 653-702 (EGGFGGRGGGRGGFGGRGGGRGGRGGFGGRGRGGFGGRGGFRGGRGGGGD) show a composition bias toward gly residues. Residues Arg-659, Arg-663, Arg-669, Arg-673, Arg-676, Arg-682, Arg-684, Arg-690, and Arg-694 each carry the asymmetric dimethylarginine modification. Position 697 is an asymmetric dimethylarginine; alternate (Arg-697). Arg-697 is subject to Omega-N-methylarginine; alternate.

As to quaternary structure, identified in a IGF2BP1-dependent mRNP granule complex containing untranslated mRNAs. Component of the SWAP complex that consists of NPM1, NCL/nucleolin, PARP1 and SWAP70. Component of a complex which is at least composed of HTATSF1/Tat-SF1, the P-TEFb complex components CDK9 and CCNT1, RNA polymerase II, SUPT5H, and NCL/nucleolin. Interacts with AICDA. Interacts with APTX. Interacts with C1QBP. Interacts with ERBB4. Interacts (via C-terminus) with FMR1 isoform 6 (via N-terminus). Interacts with GZF1; this interaction is important for nucleolar localization of GZF1. Interacts with NSUN2. Interacts with NVL. Interacts (via N-terminus domain) with SETX. Interacts (via RRM1 and C-terminal RRM4/Arg/Gly-rich domains) with TERT; the interaction is important for nucleolar localization of TERT. Interacts with WDR46. Interacts with ZFP36. Interacts with LRRC34. Interacts with RRP1B. Interacts with HNRNPU; this interaction occurs during mitosis. Interacts with RIOK1; RIOK1 recruits NCL to PRMT5 for symmetrically methylation. Interacts with ZBTB7B. Interacts with MDK; this interaction promotes NCL clustering and lateral movements of this complex into lipid rafts leading to MDK internalization. Interacts with HDGF. Interacts with ALKBH2. Interacts with IGFBP5; this interaction is necessary for IGFBP5 localization to the nucleus. Interacts with DDX24 (when ubiquitinated); this interaction may be important during ribosome biogenesis. In terms of processing, some glutamate residues are glycylated by TTLL8. This modification occurs exclusively on glutamate residues and results in a glycine chain on the gamma-carboxyl group. Symmetrically methylated by PRMT5.

It localises to the nucleus. Its subcellular location is the nucleolus. The protein localises to the cytoplasm. In terms of biological role, nucleolin is the major nucleolar protein of growing eukaryotic cells. It is found associated with intranucleolar chromatin and pre-ribosomal particles. It induces chromatin decondensation by binding to histone H1. It is thought to play a role in pre-rRNA transcription and ribosome assembly. May play a role in the process of transcriptional elongation. Binds RNA oligonucleotides with 5'-UUAGGG-3' repeats more tightly than the telomeric single-stranded DNA 5'-TTAGGG-3' repeats. This is Nucleolin (Ncl) from Rattus norvegicus (Rat).